The primary structure comprises 881 residues: Alanine--tRNA ligase (881 aa).

4 residues coordinate Zn(2+): His-564, His-568, Cys-673, and His-677. The disordered stretch occupies residues Gly-848–Lys-867.

It belongs to the class-II aminoacyl-tRNA synthetase family. It depends on Zn(2+) as a cofactor.

Its subcellular location is the cytoplasm. The enzyme catalyses tRNA(Ala) + L-alanine + ATP = L-alanyl-tRNA(Ala) + AMP + diphosphate. Its function is as follows. Catalyzes the attachment of alanine to tRNA(Ala) in a two-step reaction: alanine is first activated by ATP to form Ala-AMP and then transferred to the acceptor end of tRNA(Ala). Also edits incorrectly charged Ser-tRNA(Ala) and Gly-tRNA(Ala) via its editing domain. The sequence is that of Alanine--tRNA ligase from Hyphomonas neptunium (strain ATCC 15444).